A 437-amino-acid polypeptide reads, in one-letter code: Proline--tRNA ligase (437 aa).

This sequence belongs to the class-II aminoacyl-tRNA synthetase family. ProS type 2 subfamily. In terms of assembly, homodimer.

Its subcellular location is the cytoplasm. It carries out the reaction tRNA(Pro) + L-proline + ATP = L-prolyl-tRNA(Pro) + AMP + diphosphate. Catalyzes the attachment of proline to tRNA(Pro) in a two-step reaction: proline is first activated by ATP to form Pro-AMP and then transferred to the acceptor end of tRNA(Pro). This is Proline--tRNA ligase from Rhizorhabdus wittichii (strain DSM 6014 / CCUG 31198 / JCM 15750 / NBRC 105917 / EY 4224 / RW1) (Sphingomonas wittichii).